The chain runs to 264 residues: Small ribosomal subunit protein uS2 (264 aa).

The disordered stretch occupies residues 222 to 246 (GRSENKDEQNEQGEQIAPVTNEEKQ).

This sequence belongs to the universal ribosomal protein uS2 family.

This is Small ribosomal subunit protein uS2 from Helicobacter hepaticus (strain ATCC 51449 / 3B1).